Reading from the N-terminus, the 205-residue chain is ATP phosphoribosyltransferase (205 aa).

Belongs to the ATP phosphoribosyltransferase family. Short subfamily. As to quaternary structure, heteromultimer composed of HisG and HisZ subunits.

Its subcellular location is the cytoplasm. The enzyme catalyses 1-(5-phospho-beta-D-ribosyl)-ATP + diphosphate = 5-phospho-alpha-D-ribose 1-diphosphate + ATP. It participates in amino-acid biosynthesis; L-histidine biosynthesis; L-histidine from 5-phospho-alpha-D-ribose 1-diphosphate: step 1/9. In terms of biological role, catalyzes the condensation of ATP and 5-phosphoribose 1-diphosphate to form N'-(5'-phosphoribosyl)-ATP (PR-ATP). Has a crucial role in the pathway because the rate of histidine biosynthesis seems to be controlled primarily by regulation of HisG enzymatic activity. This Nitratiruptor sp. (strain SB155-2) protein is ATP phosphoribosyltransferase.